The chain runs to 310 residues: Dehydrodolichyl diphosphate synthase 2 (310 aa).

The protein belongs to the UPP synthase family. It depends on Mg(2+) as a cofactor.

It participates in protein modification; protein glycosylation. Its function is as follows. Catalyzes cis-prenyl chain elongation to produce the polyprenyl backbone of dolichol, a glycosyl carrier-lipid required for the biosynthesis of several classes of glycoprotein. The chain is Dehydrodolichyl diphosphate synthase 2 from Arabidopsis thaliana (Mouse-ear cress).